Here is a 169-residue protein sequence, read N- to C-terminus: S-ribosylhomocysteine lyase (169 aa).

The Fe cation site is built by His-54, His-58, and Cys-129.

The protein belongs to the LuxS family. As to quaternary structure, homodimer. Fe cation is required as a cofactor.

It catalyses the reaction S-(5-deoxy-D-ribos-5-yl)-L-homocysteine = (S)-4,5-dihydroxypentane-2,3-dione + L-homocysteine. In terms of biological role, involved in the synthesis of autoinducer 2 (AI-2) which is secreted by bacteria and is used to communicate both the cell density and the metabolic potential of the environment. The regulation of gene expression in response to changes in cell density is called quorum sensing. Catalyzes the transformation of S-ribosylhomocysteine (RHC) to homocysteine (HC) and 4,5-dihydroxy-2,3-pentadione (DPD). In Actinobacillus pleuropneumoniae serotype 5b (strain L20), this protein is S-ribosylhomocysteine lyase.